A 96-amino-acid polypeptide reads, in one-letter code: Muconolactone Delta-isomerase 2 (96 aa).

Belongs to the muconolactone Delta-isomerase family. In terms of assembly, homodecamer.

The catalysed reaction is (S)-muconolactone = (4,5-dihydro-5-oxofuran-2-yl)-acetate. It functions in the pathway aromatic compound metabolism; beta-ketoadipate pathway; 5-oxo-4,5-dihydro-2-furylacetate from catechol: step 3/3. The chain is Muconolactone Delta-isomerase 2 (catC2) from Acinetobacter lwoffii.